The primary structure comprises 554 residues: Inactive sesquithujene synthase (554 aa).

The Mg(2+) site is built by Asp-308 and Asp-312. Substrate is bound by residues Asp-308, Asp-312, Arg-449, and Asn-452. Positions 308–312 (DDMFD) match the DDXXD motif motif. Positions 452, 456, and 460 each coordinate Mg(2+).

Belongs to the terpene synthase family. Monomer. Requires Mg(2+) as cofactor. Mn(2+) serves as cofactor.

It localises to the cytoplasm. It functions in the pathway secondary metabolite biosynthesis; terpenoid biosynthesis. In terms of biological role, non-functional sesquiterpene synthase having less than 1% of the activity found in cv. Delprim. The chain is Inactive sesquithujene synthase from Zea mays (Maize).